Consider the following 83-residue polypeptide: Small ribosomal subunit protein uS17 (83 aa).

This sequence belongs to the universal ribosomal protein uS17 family. In terms of assembly, part of the 30S ribosomal subunit.

One of the primary rRNA binding proteins, it binds specifically to the 5'-end of 16S ribosomal RNA. The protein is Small ribosomal subunit protein uS17 of Francisella tularensis subsp. holarctica (strain FTNF002-00 / FTA).